A 631-amino-acid chain; its full sequence is Probable potassium transport system protein Kup 1 (631 aa).

A run of 12 helical transmembrane segments spans residues 17-37, 55-75, 101-121, 140-160, 166-186, 217-237, 249-269, 277-297, 338-358, 370-390, 395-415, and 420-440; these read LALG…LYAL, LSLI…MIIF, PLFY…GMLT, LYPY…SLQA, IGYL…ILGI, FLLG…ADIG, FFIA…NLIV, PFFM…ATVA, IYVP…CLAF, IAVN…AVSI, TFNV…FLGA, and FITG…IMYS.

Belongs to the HAK/KUP transporter (TC 2.A.72) family.

The protein resides in the cell inner membrane. The enzyme catalyses K(+)(in) + H(+)(in) = K(+)(out) + H(+)(out). Its function is as follows. Transport of potassium into the cell. Likely operates as a K(+):H(+) symporter. The polypeptide is Probable potassium transport system protein Kup 1 (Legionella pneumophila (strain Corby)).